We begin with the raw amino-acid sequence, 251 residues long: Leucine-rich repeat and calponin homology domain-containing protein 1 (251 aa).

Residues serine 73–threonine 97 form a disordered region. A phosphoserine mark is found at serine 87 and serine 91. The segment covering proline 88–threonine 97 has biased composition (polar residues). The residue at position 123 (threonine 123) is a Phosphothreonine. The 114-residue stretch at methionine 131–threonine 244 folds into the Calponin-homology (CH) domain.

In terms of assembly, interacts (via LRR repeats) with unphosphorylated DOCK8 (via DHR-2 domain); the interaction prevents the interaction between DOCK8 and CDC42.

It localises to the cytoplasm. Its function is as follows. Acts as a negative regulator of GTPase CDC42 by sequestering CDC42-guanine exchange factor DOCK8. Probably by preventing CDC42 activation, negatively regulates CD4(+) T-cell migration. This Felis catus (Cat) protein is Leucine-rich repeat and calponin homology domain-containing protein 1.